A 287-amino-acid polypeptide reads, in one-letter code: Nucleotide-binding protein Dtpsy_0831 (287 aa).

10–17 (GMSGSGKS) is a binding site for ATP. 59–62 (DVRS) contacts GTP.

The protein belongs to the RapZ-like family.

Its function is as follows. Displays ATPase and GTPase activities. The sequence is that of Nucleotide-binding protein Dtpsy_0831 from Acidovorax ebreus (strain TPSY) (Diaphorobacter sp. (strain TPSY)).